The following is a 172-amino-acid chain: Adenine phosphoribosyltransferase (172 aa).

It belongs to the purine/pyrimidine phosphoribosyltransferase family. As to quaternary structure, homodimer.

It is found in the cytoplasm. The catalysed reaction is AMP + diphosphate = 5-phospho-alpha-D-ribose 1-diphosphate + adenine. The protein operates within purine metabolism; AMP biosynthesis via salvage pathway; AMP from adenine: step 1/1. Catalyzes a salvage reaction resulting in the formation of AMP, that is energically less costly than de novo synthesis. This Rippkaea orientalis (strain PCC 8801 / RF-1) (Cyanothece sp. (strain PCC 8801)) protein is Adenine phosphoribosyltransferase.